Reading from the N-terminus, the 349-residue chain is Flagellar P-ring protein (349 aa).

An N-terminal signal peptide occupies residues 1 to 20 (MSKAIKILLPLLLFSLSLQA).

Belongs to the FlgI family. The basal body constitutes a major portion of the flagellar organelle and consists of four rings (L,P,S, and M) mounted on a central rod.

Its subcellular location is the periplasm. It localises to the bacterial flagellum basal body. In terms of biological role, assembles around the rod to form the L-ring and probably protects the motor/basal body from shearing forces during rotation. In Wolinella succinogenes (strain ATCC 29543 / DSM 1740 / CCUG 13145 / JCM 31913 / LMG 7466 / NCTC 11488 / FDC 602W) (Vibrio succinogenes), this protein is Flagellar P-ring protein.